A 176-amino-acid polypeptide reads, in one-letter code: Transcriptional repressor MprA (176 aa).

Residues 26–160 (EILLTRLCMH…LEQITRKLLS (135 aa)) form the HTH marR-type domain.

Its function is as follows. Negative regulator of the multidrug operon emrAB. The chain is Transcriptional repressor MprA (mprA) from Escherichia coli O157:H7.